The primary structure comprises 541 residues: CTP synthase (541 aa).

The tract at residues 1–265 (MTRFIFITGG…DAVVCRHFGL (265 aa)) is amidoligase domain. Position 13 (S13) interacts with CTP. UTP is bound at residue S13. Residue 14–19 (SLGKGL) coordinates ATP. L-glutamine is bound at residue Y54. ATP is bound at residue D71. Mg(2+) contacts are provided by D71 and E139. Residues 146–148 (DIE), 186–191 (KTKPTQ), and K222 contribute to the CTP site. Residues 186–191 (KTKPTQ) and K222 contribute to the UTP site. One can recognise a Glutamine amidotransferase type-1 domain in the interval 290–540 (TIAIVGKYIS…IAAAVRQSRL (251 aa)). Residue G352 coordinates L-glutamine. Catalysis depends on C379, which acts as the Nucleophile; for glutamine hydrolysis. L-glutamine contacts are provided by residues 380 to 383 (FGMQ), E403, and R468. Active-site residues include H513 and E515.

The protein belongs to the CTP synthase family. As to quaternary structure, homotetramer.

It catalyses the reaction UTP + L-glutamine + ATP + H2O = CTP + L-glutamate + ADP + phosphate + 2 H(+). The enzyme catalyses L-glutamine + H2O = L-glutamate + NH4(+). The catalysed reaction is UTP + NH4(+) + ATP = CTP + ADP + phosphate + 2 H(+). It functions in the pathway pyrimidine metabolism; CTP biosynthesis via de novo pathway; CTP from UDP: step 2/2. Its activity is regulated as follows. Allosterically activated by GTP, when glutamine is the substrate; GTP has no effect on the reaction when ammonia is the substrate. The allosteric effector GTP functions by stabilizing the protein conformation that binds the tetrahedral intermediate(s) formed during glutamine hydrolysis. Inhibited by the product CTP, via allosteric rather than competitive inhibition. Functionally, catalyzes the ATP-dependent amination of UTP to CTP with either L-glutamine or ammonia as the source of nitrogen. Regulates intracellular CTP levels through interactions with the four ribonucleotide triphosphates. The sequence is that of CTP synthase from Paramagnetospirillum magneticum (strain ATCC 700264 / AMB-1) (Magnetospirillum magneticum).